Reading from the N-terminus, the 444-residue chain is Homogentisate 1,2-dioxygenase (444 aa).

Catalysis depends on His-298, which acts as the Proton acceptor. His-341 and Glu-347 together coordinate Fe cation. Tyr-356 and His-377 together coordinate homogentisate. Fe cation is bound at residue His-377.

Belongs to the homogentisate dioxygenase family. As to quaternary structure, hexamer; dimer of trimers. It depends on Fe cation as a cofactor.

The enzyme catalyses homogentisate + O2 = 4-maleylacetoacetate + H(+). The protein operates within amino-acid degradation; L-phenylalanine degradation; acetoacetate and fumarate from L-phenylalanine: step 4/6. Functionally, involved in the catabolism of homogentisate (2,5-dihydroxyphenylacetate or 2,5-OH-PhAc), a central intermediate in the degradation of phenylalanine and tyrosine. Catalyzes the oxidative ring cleavage of the aromatic ring of homogentisate to yield maleylacetoacetate. This Burkholderia cenocepacia (strain ATCC BAA-245 / DSM 16553 / LMG 16656 / NCTC 13227 / J2315 / CF5610) (Burkholderia cepacia (strain J2315)) protein is Homogentisate 1,2-dioxygenase.